Consider the following 532-residue polypeptide: Maternal protein exuperantia (532 aa).

2 disordered regions span residues 206–251 (CSAS…NAVQ) and 403–491 (TVKP…NGLK). 2 stretches are compositionally biased toward low complexity: residues 220-231 (GSSMVSDSVSIS) and 404-417 (VKPV…NNNN). The span at 454 to 467 (SVSSLPDSTTKTPS) shows a compositional bias: polar residues. S467 carries the phosphoserine modification.

Component of the osk RNP complex, which is composed of at least exuperantia (exu), ypsilon schachtel (yps), aret (bruno), cup, and the mRNA of osk. In the sponge body, forms a ribonucleoprotein complex (RNP) containing at least me31B, exu, yps and the mRNA of osk; interactions with exu and yps are RNA dependent.

The protein resides in the cytoplasm. It is found in the cytoplasmic ribonucleoprotein granule. Its function is as follows. Ensures the proper localization of the mRNA of the bicoid gene to the anterior regions of the oocyte thus playing a fundamental role in the establishment of the polarity of the oocyte. May bind the bcd mRNA. The protein is Maternal protein exuperantia (exu) of Drosophila melanogaster (Fruit fly).